We begin with the raw amino-acid sequence, 116 residues long: Large ribosomal subunit protein uL18 (116 aa).

The protein belongs to the universal ribosomal protein uL18 family. In terms of assembly, part of the 50S ribosomal subunit; part of the 5S rRNA/L5/L18/L25 subcomplex. Contacts the 5S and 23S rRNAs.

Functionally, this is one of the proteins that bind and probably mediate the attachment of the 5S RNA into the large ribosomal subunit, where it forms part of the central protuberance. The polypeptide is Large ribosomal subunit protein uL18 (Alcanivorax borkumensis (strain ATCC 700651 / DSM 11573 / NCIMB 13689 / SK2)).